Consider the following 279-residue polypeptide: DegV domain-containing protein lmo1863 (279 aa).

Residues 4–278 (IKIITDSTAG…TGAFAFMYYT (275 aa)) form the DegV domain. The hexadecanoate site is built by serine 62 and serine 94.

Its function is as follows. May bind long-chain fatty acids, such as palmitate, and may play a role in lipid transport or fatty acid metabolism. The protein is DegV domain-containing protein lmo1863 of Listeria monocytogenes serovar 1/2a (strain ATCC BAA-679 / EGD-e).